A 274-amino-acid chain; its full sequence is DNA-directed RNA polymerase subunit Rpo3 (274 aa).

3 residues coordinate [3Fe-4S] cluster: C202, C205, and C208.

It belongs to the archaeal Rpo3/eukaryotic RPB3 RNA polymerase subunit family. Part of the RNA polymerase complex. It depends on [3Fe-4S] cluster as a cofactor.

Its subcellular location is the cytoplasm. The catalysed reaction is RNA(n) + a ribonucleoside 5'-triphosphate = RNA(n+1) + diphosphate. Its function is as follows. DNA-dependent RNA polymerase (RNAP) catalyzes the transcription of DNA into RNA using the four ribonucleoside triphosphates as substrates. This Methanobrevibacter smithii (strain ATCC 35061 / DSM 861 / OCM 144 / PS) protein is DNA-directed RNA polymerase subunit Rpo3.